The chain runs to 248 residues: Large ribosomal subunit protein bL9m (248 aa).

A mitochondrion-targeting transit peptide spans 1 to 25 (MLKNIYVTPLNLLKSATSLQQQVRT).

This sequence belongs to the bacterial ribosomal protein bL9 family. Component of the mitochondrial ribosome large subunit (39S) which comprises a 16S rRNA and about 50 distinct proteins.

Its subcellular location is the mitochondrion. The protein is Large ribosomal subunit protein bL9m (mRpL9) of Drosophila melanogaster (Fruit fly).